A 57-amino-acid polypeptide reads, in one-letter code: Sec-independent protein translocase protein TatAy (57 aa).

Residues 1–21 (MPIGPGSLAVIAIVALIIFGP) form a helical membrane-spanning segment.

Belongs to the TatA/E family. Forms a complex with TatCy. Two types of complexes exist: one composed of TatAy and TatCy, and another composed only of TatAy. Cytosolic TatA forms large complexes or aggregates.

The protein localises to the cell membrane. The protein resides in the cytoplasm. It localises to the cytosol. Its function is as follows. Part of the twin-arginine translocation (Tat) system that transports large folded proteins containing a characteristic twin-arginine motif in their signal peptide across membranes. TatA could form the protein-conducting channel of the Tat system. Required for YwbN secretion. The sequence is that of Sec-independent protein translocase protein TatAy from Bacillus subtilis (strain 168).